Reading from the N-terminus, the 456-residue chain is Bifunctional protein GlmU (456 aa).

The segment at 1-230 (MDKRFAVVLA…FQETLGVNDR (230 aa)) is pyrophosphorylase. Residues 9 to 12 (LAAG), Lys-23, Gln-73, and 78 to 79 (GT) each bind UDP-N-acetyl-alpha-D-glucosamine. Asp-103 provides a ligand contact to Mg(2+). Residues Gly-140, Glu-155, Asn-170, and Asn-228 each contribute to the UDP-N-acetyl-alpha-D-glucosamine site. Asn-228 serves as a coordination point for Mg(2+). The tract at residues 231-251 (VALSQAEIYMKQRINKRHMQN) is linker. Positions 252–456 (GVSLIDPDNT…EDYAENIHKK (205 aa)) are N-acetyltransferase. Residues Arg-333 and Lys-351 each contribute to the UDP-N-acetyl-alpha-D-glucosamine site. The active-site Proton acceptor is the His-363. UDP-N-acetyl-alpha-D-glucosamine-binding residues include Tyr-366 and Asn-377. Residues 386-387 (NY), Ala-423, and Arg-440 each bind acetyl-CoA.

It in the N-terminal section; belongs to the N-acetylglucosamine-1-phosphate uridyltransferase family. This sequence in the C-terminal section; belongs to the transferase hexapeptide repeat family. Homotrimer. Mg(2+) serves as cofactor.

The protein resides in the cytoplasm. The catalysed reaction is alpha-D-glucosamine 1-phosphate + acetyl-CoA = N-acetyl-alpha-D-glucosamine 1-phosphate + CoA + H(+). It catalyses the reaction N-acetyl-alpha-D-glucosamine 1-phosphate + UTP + H(+) = UDP-N-acetyl-alpha-D-glucosamine + diphosphate. It participates in nucleotide-sugar biosynthesis; UDP-N-acetyl-alpha-D-glucosamine biosynthesis; N-acetyl-alpha-D-glucosamine 1-phosphate from alpha-D-glucosamine 6-phosphate (route II): step 2/2. It functions in the pathway nucleotide-sugar biosynthesis; UDP-N-acetyl-alpha-D-glucosamine biosynthesis; UDP-N-acetyl-alpha-D-glucosamine from N-acetyl-alpha-D-glucosamine 1-phosphate: step 1/1. The protein operates within bacterial outer membrane biogenesis; LPS lipid A biosynthesis. In terms of biological role, catalyzes the last two sequential reactions in the de novo biosynthetic pathway for UDP-N-acetylglucosamine (UDP-GlcNAc). The C-terminal domain catalyzes the transfer of acetyl group from acetyl coenzyme A to glucosamine-1-phosphate (GlcN-1-P) to produce N-acetylglucosamine-1-phosphate (GlcNAc-1-P), which is converted into UDP-GlcNAc by the transfer of uridine 5-monophosphate (from uridine 5-triphosphate), a reaction catalyzed by the N-terminal domain. The protein is Bifunctional protein GlmU of Bacillus licheniformis (strain ATCC 14580 / DSM 13 / JCM 2505 / CCUG 7422 / NBRC 12200 / NCIMB 9375 / NCTC 10341 / NRRL NRS-1264 / Gibson 46).